Here is a 39-residue protein sequence, read N- to C-terminus: MTIDRTYPIFTVRWLAIHGLAVPTVFSLGSISAMQFIQR.

Residues 14–30 form a helical membrane-spanning segment; that stretch reads WLAIHGLAVPTVFSLGS. His18 lines the heme pocket.

Belongs to the PsbE/PsbF family. In terms of assembly, heterodimer of an alpha subunit and a beta subunit. PSII is composed of 1 copy each of membrane proteins PsbA, PsbB, PsbC, PsbD, PsbE, PsbF, PsbH, PsbI, PsbJ, PsbK, PsbL, PsbM, PsbT, PsbX, PsbY, PsbZ, Psb30/Ycf12, at least 3 peripheral proteins of the oxygen-evolving complex and a large number of cofactors. It forms dimeric complexes. Heme b serves as cofactor.

It is found in the plastid. The protein localises to the chloroplast thylakoid membrane. In terms of biological role, this b-type cytochrome is tightly associated with the reaction center of photosystem II (PSII). PSII is a light-driven water:plastoquinone oxidoreductase that uses light energy to abstract electrons from H(2)O, generating O(2) and a proton gradient subsequently used for ATP formation. It consists of a core antenna complex that captures photons, and an electron transfer chain that converts photonic excitation into a charge separation. This Huperzia lucidula (Shining clubmoss) protein is Cytochrome b559 subunit beta.